Reading from the N-terminus, the 880-residue chain is MOG interacting and ectopic P-granules protein 1 (880 aa).

Polar residues predominate over residues 1 to 20 (MVTSDETVLATTTNKTSITT). Disordered stretches follow at residues 1–37 (MVTS…SETD), 82–257 (DKVE…DDNE), and 350–370 (ERPK…QHNP). Residues 23-37 (MEPKSSDESTDSETD) show a composition bias toward basic and acidic residues. A compositionally biased stretch (polar residues) spans 87 to 105 (ATNSVVDLSSNGSSATTSV). Positions 108 to 120 (EEQEEKANEDETN) are enriched in acidic residues. Basic and acidic residues-rich tracts occupy residues 154–170 (SKSD…IKDS) and 183–193 (KPEEKEEKNDT). Acidic residues predominate over residues 215–224 (QLDDDDDDIQ). 2 stretches are compositionally biased toward basic and acidic residues: residues 235 to 252 (QKTE…KAEP) and 350 to 364 (ERPK…ERQQ). 2 consecutive C2H2-type zinc fingers follow at residues 436 to 459 (SRCG…ETLH) and 465 to 488 (FQCT…FEAH). A CCHC-type zinc finger spans residues 501-523 (YPCAICEEDFNFKGVREQHYKQC). C2H2-type zinc fingers lie at residues 728–751 (FQCE…QVLH), 768–791 (LACS…VMSH), 809–830 (GRCK…VADH), and 841–864 (YSCD…SSTH).

Interacts with hda-1, let-418, lin-1, mog-1, mog-4, mog-5, mog-6, pie-1 and unc-98.

It localises to the nucleus. Functionally, has a broad role in development, specifically in the genetic pathway SynMuvB that negatively regulates specification of the vulval cell fate. Required for fem-3 3'-UTR-mediated repression in the regulation of the sperm/oocyte switch. Acts by regulating the translation of fem-3 mRNA, by binding to its 3'-UTR. The sequence is that of MOG interacting and ectopic P-granules protein 1 from Caenorhabditis briggsae.